We begin with the raw amino-acid sequence, 457 residues long: tRNA modification GTPase MnmE (457 aa).

(6S)-5-formyl-5,6,7,8-tetrahydrofolate contacts are provided by arginine 25, glutamate 87, and arginine 126. In terms of domain architecture, TrmE-type G spans 223–377 (GISTAIIGRP…IEERINNLFF (155 aa)). A K(+)-binding site is contributed by asparagine 233. GTP is bound by residues 233–238 (NVGKSS), 252–258 (TDIAGTT), and 277–280 (DTAG). Serine 237 is a Mg(2+) binding site. Threonine 252, isoleucine 254, and threonine 257 together coordinate K(+). Threonine 258 provides a ligand contact to Mg(2+). Lysine 457 provides a ligand contact to (6S)-5-formyl-5,6,7,8-tetrahydrofolate.

The protein belongs to the TRAFAC class TrmE-Era-EngA-EngB-Septin-like GTPase superfamily. TrmE GTPase family. Homodimer. Heterotetramer of two MnmE and two MnmG subunits. Requires K(+) as cofactor.

It localises to the cytoplasm. Functionally, exhibits a very high intrinsic GTPase hydrolysis rate. Involved in the addition of a carboxymethylaminomethyl (cmnm) group at the wobble position (U34) of certain tRNAs, forming tRNA-cmnm(5)s(2)U34. This Streptococcus pneumoniae (strain Hungary19A-6) protein is tRNA modification GTPase MnmE.